Reading from the N-terminus, the 121-residue chain is Flagellar protein FliT (121 aa).

A required for homodimerization region spans residues 1–50; the sequence is MNHAPHLYFAWQQLVEKSQLMLRLATEEQWDELIASEMAYVNAVQEIAHL. The segment at 60–98 is fliD binding; that stretch reads MQEQLRPMLRLILDNESKVKQLLQIRMDELAKLVGQSSV.

This sequence belongs to the FliT family. In terms of assembly, homodimer. Interacts with FliD and FlhC.

It localises to the cytoplasm. The protein resides in the cytosol. Functionally, dual-function protein that regulates the transcription of class 2 flagellar operons and that also acts as an export chaperone for the filament-capping protein FliD. As a transcriptional regulator, acts as an anti-FlhDC factor; it directly binds FlhC, thus inhibiting the binding of the FlhC/FlhD complex to class 2 promoters, resulting in decreased expression of class 2 flagellar operons. As a chaperone, effects FliD transition to the membrane by preventing its premature polymerization, and by directing it to the export apparatus. The polypeptide is Flagellar protein FliT (Escherichia coli O157:H7).